A 360-amino-acid chain; its full sequence is Membrane-bound lytic murein transglycosylase C (360 aa).

Residues 1-16 form the signal peptide; that stretch reads MKKLLALAVIAPLLIS. The N-palmitoyl cysteine moiety is linked to residue cysteine 17. A lipid anchor (S-diacylglycerol cysteine) is attached at cysteine 17.

Belongs to the transglycosylase Slt family.

It localises to the cell outer membrane. The enzyme catalyses Exolytic cleavage of the (1-&gt;4)-beta-glycosidic linkage between N-acetylmuramic acid (MurNAc) and N-acetylglucosamine (GlcNAc) residues in peptidoglycan, from either the reducing or the non-reducing ends of the peptidoglycan chains, with concomitant formation of a 1,6-anhydrobond in the MurNAc residue.. In terms of biological role, murein-degrading enzyme. May play a role in recycling of muropeptides during cell elongation and/or cell division. This chain is Membrane-bound lytic murein transglycosylase C, found in Salmonella paratyphi A (strain ATCC 9150 / SARB42).